Consider the following 234-residue polypeptide: Orotidine 5'-phosphate decarboxylase (234 aa).

Substrate-binding positions include Asp-11, Lys-33, 60–69 (DLKFHDIPNT), Thr-120, Arg-181, Gln-190, Gly-210, and Arg-211. Lys-62 (proton donor) is an active-site residue.

Belongs to the OMP decarboxylase family. Type 1 subfamily. Homodimer.

It carries out the reaction orotidine 5'-phosphate + H(+) = UMP + CO2. It functions in the pathway pyrimidine metabolism; UMP biosynthesis via de novo pathway; UMP from orotate: step 2/2. In terms of biological role, catalyzes the decarboxylation of orotidine 5'-monophosphate (OMP) to uridine 5'-monophosphate (UMP). The protein is Orotidine 5'-phosphate decarboxylase of Shewanella sediminis (strain HAW-EB3).